A 303-amino-acid polypeptide reads, in one-letter code: D-alanyl-D-alanine carboxypeptidase (303 aa).

A helical transmembrane segment spans residues 7-23; it reads LLLLLFLIYLGYDYVNE. The disordered stretch occupies residues 37 to 56; it reads DQNPKEHLENSGTSENTQEK. Substrate contacts are provided by residues 154–156 and Ser-161; that span reads YAL. Residues His-163 and Asp-170 each coordinate Zn(2+). Catalysis depends on Glu-213, which acts as the Proton donor/acceptor. Residue His-216 participates in Zn(2+) binding.

The protein belongs to the peptidase M15B family. Zn(2+) serves as cofactor.

It is found in the cell membrane. Its activity is regulated as follows. The DD-carboxypeptidase activity is not inhibited by beta-lactam antibiotics. In terms of biological role, cleaves the C-terminal D-alanine residue of UDP-muramyl-pentapeptide (UDP-MurNAc-L-Ala-D-Glu-mDAP-D-Ala-D-Ala) or diacetyl-L-Lys-D-Ala-D-Ala. However the physiological substrate likely contains L-Lys instead of mDAP at the third position of the pentapeptide. Also releases the C-terminal D-lactate from UDP-MurNAc-L-Ala-D-Glu-mDAP-D-Ala-D-lactate, a depsipeptide produced by the vancomycin resistance protein VanA. Therefore, VanY should contribute in vivo to the hydrolysis of both the D-alanyl-D-alanine- and the depsipeptide-containing peptidoglycan precursors. Is not necessary for vancomycin resistance of E.faecium BM4147 and perhaps not W14-9. Does not display transpeptidase or beta-lactamase activities. The chain is D-alanyl-D-alanine carboxypeptidase from Enterococcus faecium (Streptococcus faecium).